We begin with the raw amino-acid sequence, 222 residues long: Kinetochore protein Spc25 (222 aa).

Residues 51–86 (RHQRKVGKLQKVLMERREELDKRVSFIEELDRELEA) are a coiled coil.

It belongs to the SPC25 family. As to quaternary structure, component of the Ndc80 complex, which is composed of Ndc80, Nuf2 and Spc25.

It is found in the nucleus. Its subcellular location is the chromosome. The protein resides in the centromere. It localises to the kinetochore. Its function is as follows. Acts as a component of the essential kinetochore-associated Ndc80 complex, which is required for chromosome segregation and spindle checkpoint activity during meiosis and mitosis. Required for kinetochore integrity and the organization of stable microtubule binding sites in the outer plate of the kinetochore. Participates in SAC signaling that responds specifically to disruptions in spindle microtubule dynamics. The NDC80 complex synergistically enhances the affinity of the SKA1 complex for microtubules and may allow the NDC80 complex to track depolymerizing microtubules. The polypeptide is Kinetochore protein Spc25 (Drosophila simulans (Fruit fly)).